The chain runs to 266 residues: Protein crossbronx-like (266 aa).

Positions 15–178 constitute a UBC core domain; sequence KQGYHILAEY…VQEQAILSRN (164 aa). Residues 234–266 are disordered; sequence SSRQLDEEEANQVEKLHRGRIPEHQREESEVSL. Over residues 245–266 the composition is skewed to basic and acidic residues; that stretch reads QVEKLHRGRIPEHQREESEVSL.

This sequence belongs to the ubiquitin-conjugating enzyme family. FTS subfamily.

This is Protein crossbronx-like from Drosophila melanogaster (Fruit fly).